The primary structure comprises 249 residues: Eukaryotic translation initiation factor 6 (249 aa).

Belongs to the eIF-6 family. Monomer. Associates with the 60S ribosomal subunit.

The protein resides in the cytoplasm. The protein localises to the nucleus. It is found in the nucleolus. Binds to the 60S ribosomal subunit and prevents its association with the 40S ribosomal subunit to form the 80S initiation complex in the cytoplasm. May also be involved in ribosome biogenesis. The polypeptide is Eukaryotic translation initiation factor 6 (Babesia bovis).